Here is a 454-residue protein sequence, read N- to C-terminus: F-box protein At1g67130 (454 aa).

Positions 4-53 (GETLDSIPTDLILDILSRLPTKSIARFHCVSKLWSSMLASQDFTRLFVNR) constitute an F-box domain.

This chain is F-box protein At1g67130, found in Arabidopsis thaliana (Mouse-ear cress).